Consider the following 452-residue polypeptide: uncharacterized protein (452 aa).

Positions 1 to 20 (MQFFGSLFVSLLGAAGLANA) are cleaved as a signal peptide. The tract at residues 130–151 (TQSSSNSTSTMNSTGSVSGGSV) is disordered.

It is found in the endoplasmic reticulum. This is an uncharacterized protein from Schizosaccharomyces pombe (strain 972 / ATCC 24843) (Fission yeast).